The primary structure comprises 607 residues: Large ribosomal subunit assembly factor BipA (607 aa).

One can recognise a tr-type G domain in the interval 3-198 (ENLRNIAIIA…AIVDHVPAPD (196 aa)). GTP contacts are provided by residues 15–20 (DHGKTT) and 128–131 (NKVD). A C-terminal domain (CTD), required but not sufficient to bind 70S or 30S ribosomes region spans residues 481–607 (GQRQNGVLIS…RRANRGQKEE (127 aa)).

This sequence belongs to the TRAFAC class translation factor GTPase superfamily. Classic translation factor GTPase family. BipA subfamily. In terms of assembly, monomer.

It is found in the cytoplasm. It catalyses the reaction GTP + H2O = GDP + phosphate + H(+). Its activity is regulated as follows. Ribosome-associated GTPase is not affected by low levels of ppGpp, &gt;40 uM ppGpp and &gt;50 uM GDP inhibit GTPase. The C-terminus (residues 387-607 or 481-607) inhibits GTPase activity, in its absence kcat increases, but GTPase is no longer stimulated by 70S ribosome or 30S or 50S subunits. In terms of biological role, a 50S ribosomal subunit assembly protein with GTPase activity, required for 50S subunit assembly at low temperatures, may also play a role in translation. Binds GTP and analogs. Binds the 70S ribosome between the 30S and 50S subunits, in a similar position as ribosome-bound EF-G; it contacts a number of ribosomal proteins, both rRNAs and the A-site tRNA. A ribosome-stimulated GTPase, GTPase activity increases 4 fold in the presence of 70S ribosomes. Binds 70S ribosomes in the presence of GTP or its non-hydrolyzable analog GMPPNP; in the presence of ppGpp or under stress conditions it binds to 30S ribosomal subunits. The protein is Large ribosomal subunit assembly factor BipA of Salmonella typhimurium (strain LT2 / SGSC1412 / ATCC 700720).